The primary structure comprises 853 residues: DNA mismatch repair protein MutS (853 aa).

Residue 614-621 participates in ATP binding; the sequence is GPNMGGKS.

This sequence belongs to the DNA mismatch repair MutS family.

Functionally, this protein is involved in the repair of mismatches in DNA. It is possible that it carries out the mismatch recognition step. This protein has a weak ATPase activity. The polypeptide is DNA mismatch repair protein MutS (Escherichia coli (strain K12 / MC4100 / BW2952)).